We begin with the raw amino-acid sequence, 612 residues long: Dihydroxy-acid dehydratase (612 aa).

Asp-81 contributes to the Mg(2+) binding site. Cys-122 provides a ligand contact to [2Fe-2S] cluster. Mg(2+) contacts are provided by Asp-123 and Lys-124. Residue Lys-124 is modified to N6-carboxylysine. Residue Cys-195 coordinates [2Fe-2S] cluster. Glu-491 is a binding site for Mg(2+). Residue Ser-517 is the Proton acceptor of the active site.

Belongs to the IlvD/Edd family. In terms of assembly, homodimer. Requires [2Fe-2S] cluster as cofactor. Mg(2+) is required as a cofactor.

It catalyses the reaction (2R)-2,3-dihydroxy-3-methylbutanoate = 3-methyl-2-oxobutanoate + H2O. The catalysed reaction is (2R,3R)-2,3-dihydroxy-3-methylpentanoate = (S)-3-methyl-2-oxopentanoate + H2O. It participates in amino-acid biosynthesis; L-isoleucine biosynthesis; L-isoleucine from 2-oxobutanoate: step 3/4. Its pathway is amino-acid biosynthesis; L-valine biosynthesis; L-valine from pyruvate: step 3/4. In terms of biological role, functions in the biosynthesis of branched-chain amino acids. Catalyzes the dehydration of (2R,3R)-2,3-dihydroxy-3-methylpentanoate (2,3-dihydroxy-3-methylvalerate) into 2-oxo-3-methylpentanoate (2-oxo-3-methylvalerate) and of (2R)-2,3-dihydroxy-3-methylbutanoate (2,3-dihydroxyisovalerate) into 2-oxo-3-methylbutanoate (2-oxoisovalerate), the penultimate precursor to L-isoleucine and L-valine, respectively. The chain is Dihydroxy-acid dehydratase from Rhizobium etli (strain CIAT 652).